A 474-amino-acid polypeptide reads, in one-letter code: Methylenetetrahydrofolate--tRNA-(uracil-5-)-methyltransferase TrmFO (474 aa).

14-19 (GGGLAG) is an FAD binding site.

Belongs to the MnmG family. TrmFO subfamily. FAD is required as a cofactor.

Its subcellular location is the cytoplasm. The enzyme catalyses uridine(54) in tRNA + (6R)-5,10-methylene-5,6,7,8-tetrahydrofolate + NADH + H(+) = 5-methyluridine(54) in tRNA + (6S)-5,6,7,8-tetrahydrofolate + NAD(+). It carries out the reaction uridine(54) in tRNA + (6R)-5,10-methylene-5,6,7,8-tetrahydrofolate + NADPH + H(+) = 5-methyluridine(54) in tRNA + (6S)-5,6,7,8-tetrahydrofolate + NADP(+). In terms of biological role, catalyzes the folate-dependent formation of 5-methyl-uridine at position 54 (M-5-U54) in all tRNAs. This is Methylenetetrahydrofolate--tRNA-(uracil-5-)-methyltransferase TrmFO from Caulobacter vibrioides (strain ATCC 19089 / CIP 103742 / CB 15) (Caulobacter crescentus).